The chain runs to 90 residues: Molybdopterin synthase sulfur carrier subunit (90 aa).

Gly90 carries the 1-thioglycine; alternate modification. Residue Gly90 is modified to Glycyl adenylate; alternate.

It belongs to the MoaD family. MOCS2A subfamily. As to quaternary structure, heterotetramer; composed of 2 small (Mocs2A) and 2 large (Mocs2B) subunits. C-terminal thiocarboxylation occurs in 2 steps, it is first acyl-adenylated (-COAMP) via the hesA/moeB/thiF part of MOCS3, then thiocarboxylated (-COSH) via the rhodanese domain of MOCS3.

The protein localises to the cytoplasm. It functions in the pathway cofactor biosynthesis; molybdopterin biosynthesis. Its function is as follows. Acts as a sulfur carrier required for molybdopterin biosynthesis. Component of the molybdopterin synthase complex that catalyzes the conversion of precursor Z into molybdopterin by mediating the incorporation of 2 sulfur atoms into precursor Z to generate a dithiolene group. In the complex, serves as sulfur donor by being thiocarboxylated (-COSH) at its C-terminus by MOCS3. After interaction with Mocs2B, the sulfur is then transferred to precursor Z to form molybdopterin. This is Molybdopterin synthase sulfur carrier subunit from Drosophila yakuba (Fruit fly).